A 505-amino-acid chain; its full sequence is Exodeoxyribonuclease 7 large subunit (505 aa).

Residues 466-505 are disordered; sequence SGDRDAVIDGEGGPAPAPTAPAPKPRPKPAAPPAGQGDLF. The span at 480-497 shows a compositional bias: pro residues; the sequence is APAPTAPAPKPRPKPAAP.

It belongs to the XseA family. In terms of assembly, heterooligomer composed of large and small subunits.

Its subcellular location is the cytoplasm. It catalyses the reaction Exonucleolytic cleavage in either 5'- to 3'- or 3'- to 5'-direction to yield nucleoside 5'-phosphates.. Bidirectionally degrades single-stranded DNA into large acid-insoluble oligonucleotides, which are then degraded further into small acid-soluble oligonucleotides. The protein is Exodeoxyribonuclease 7 large subunit of Caulobacter vibrioides (strain NA1000 / CB15N) (Caulobacter crescentus).